The chain runs to 805 residues: Nitrite reductase [NAD(P)H] (805 aa).

Tyrosine 43–asparagine 79 serves as a coordination point for FAD. Leucine 193 to arginine 223 provides a ligand contact to NADP(+). Residues cysteine 418, cysteine 420, cysteine 453, and cysteine 456 each coordinate [2Fe-2S] cluster. [4Fe-4S] cluster is bound by residues cysteine 635, cysteine 641, cysteine 675, and cysteine 679. Cysteine 679 contacts siroheme.

Belongs to the nitrite and sulfite reductase 4Fe-4S domain family. In terms of assembly, homodimer. Requires siroheme as cofactor. [2Fe-2S] cluster serves as cofactor. The cofactor is [4Fe-4S] cluster. It depends on FAD as a cofactor.

The catalysed reaction is NH4(+) + 3 NADP(+) + 2 H2O = nitrite + 3 NADPH + 5 H(+). It catalyses the reaction NH4(+) + 3 NAD(+) + 2 H2O = nitrite + 3 NADH + 5 H(+). It functions in the pathway nitrogen metabolism; nitrate reduction (assimilation). Functionally, required for nitrite assimilation. The protein is Nitrite reductase [NAD(P)H] (nasD) of Bacillus subtilis (strain 168).